Here is a 384-residue protein sequence, read N- to C-terminus: Acetylornithine aminotransferase (384 aa).

Residues 95–96 (GA) and Phe122 each bind pyridoxal 5'-phosphate. Arg125 contributes to the N(2)-acetyl-L-ornithine binding site. Position 207–210 (207–210 (DEIQ)) interacts with pyridoxal 5'-phosphate. Lys236 is modified (N6-(pyridoxal phosphate)lysine). Ser264 serves as a coordination point for N(2)-acetyl-L-ornithine. Position 265 (Thr265) interacts with pyridoxal 5'-phosphate.

The protein belongs to the class-III pyridoxal-phosphate-dependent aminotransferase family. ArgD subfamily. In terms of assembly, homodimer. Pyridoxal 5'-phosphate serves as cofactor.

It is found in the cytoplasm. The enzyme catalyses N(2)-acetyl-L-ornithine + 2-oxoglutarate = N-acetyl-L-glutamate 5-semialdehyde + L-glutamate. It functions in the pathway amino-acid biosynthesis; L-arginine biosynthesis; N(2)-acetyl-L-ornithine from L-glutamate: step 4/4. This chain is Acetylornithine aminotransferase, found in Halalkalibacterium halodurans (strain ATCC BAA-125 / DSM 18197 / FERM 7344 / JCM 9153 / C-125) (Bacillus halodurans).